Consider the following 274-residue polypeptide: Rhamnulose-1-phosphate aldolase (274 aa).

The active site involves glutamate 117. Histidine 141, histidine 143, and histidine 212 together coordinate Zn(2+).

This sequence belongs to the aldolase class II family. RhaD subfamily. As to quaternary structure, homotetramer. The cofactor is Zn(2+).

The protein localises to the cytoplasm. It carries out the reaction L-rhamnulose 1-phosphate = (S)-lactaldehyde + dihydroxyacetone phosphate. It functions in the pathway carbohydrate degradation; L-rhamnose degradation; glycerone phosphate from L-rhamnose: step 3/3. Functionally, catalyzes the reversible cleavage of L-rhamnulose-1-phosphate to dihydroxyacetone phosphate (DHAP) and L-lactaldehyde. This chain is Rhamnulose-1-phosphate aldolase, found in Shigella boydii serotype 4 (strain Sb227).